A 104-amino-acid polypeptide reads, in one-letter code: Small ribosomal subunit protein uS10 (104 aa).

Belongs to the universal ribosomal protein uS10 family. In terms of assembly, part of the 30S ribosomal subunit.

Functionally, involved in the binding of tRNA to the ribosomes. The chain is Small ribosomal subunit protein uS10 from Helicobacter pylori (strain J99 / ATCC 700824) (Campylobacter pylori J99).